A 378-amino-acid chain; its full sequence is MIRVLSVFGTRPEAIKMAPLVKKLEEEQNVESLVCVTAQHRQMLDQVLEVFDIKPDFDLNIMKERQNLSDITVNALSGLYDLIGELKPDIVLVQGDTTTTFAGALAAFYHRIPVGHVEAGLRTNDRYSPFPEEINRRLTGVLSTLHFAPTKRNRENLLKENVMGKIYVTGNTVIDALRYTVKENHVFEDPILRNMDFSDGRYILLTSHRRENIGKPLENICRAVRRIVEGFEDVKVIYPVHMNPAVREIVFPMLENVERVFLIDPVNVIDMHNLMARSYLIMTDSGGIQEEAPALGKPVIVLRKETERPEAIEAGVAVLGGVEEERIFELAKKLLVDREEYEKMAKAVNPFGDGRASERIVKAILHEFGLSDPPEEFC.

Belongs to the UDP-N-acetylglucosamine 2-epimerase family.

The protein localises to the cytoplasm. The catalysed reaction is UDP-N-acetyl-alpha-D-glucosamine = UDP-N-acetyl-alpha-D-mannosamine. This chain is Putative UDP-N-acetylglucosamine 2-epimerase, found in Thermotoga maritima (strain ATCC 43589 / DSM 3109 / JCM 10099 / NBRC 100826 / MSB8).